An 818-amino-acid polypeptide reads, in one-letter code: Glycerol-3-phosphate acyltransferase (818 aa).

Residues 305 to 310 carry the HXXXXD motif motif; that stretch reads CHRSHM.

This sequence belongs to the GPAT/DAPAT family.

It localises to the cell inner membrane. It carries out the reaction sn-glycerol 3-phosphate + an acyl-CoA = a 1-acyl-sn-glycero-3-phosphate + CoA. It participates in phospholipid metabolism; CDP-diacylglycerol biosynthesis; CDP-diacylglycerol from sn-glycerol 3-phosphate: step 1/3. The protein is Glycerol-3-phosphate acyltransferase of Edwardsiella ictaluri (strain 93-146).